The primary structure comprises 391 residues: Putative 12-oxophytodienoate reductase 6 (391 aa).

FMN is bound by residues 42 to 44, Ala-75, and Gln-117; that span reads PMT. Residue 189 to 192 coordinates substrate; the sequence is HGAN. Tyr-194 serves as the catalytic Proton donor. Position 241 (Arg-241) interacts with FMN. Residue Arg-282 coordinates substrate. Residues Gly-312 and 333–334 contribute to the FMN site; that span reads GR. Residues 372–391 form a disordered region; it reads YPFLDEHHHDDDDDSNAPSA. Over residues 382–391 the composition is skewed to acidic residues; that stretch reads DDDDSNAPSA.

The protein belongs to the NADH:flavin oxidoreductase/NADH oxidase family. The cofactor is FMN.

Its function is as follows. Putative oxophytodienoate reductase that may be involved in the biosynthesis or metabolism of oxylipin signaling molecules. In Oryza sativa subsp. japonica (Rice), this protein is Putative 12-oxophytodienoate reductase 6 (OPR6).